Reading from the N-terminus, the 237-residue chain is Ribosomal RNA small subunit methyltransferase G (237 aa).

S-adenosyl-L-methionine-binding positions include G78, F83, 129–130, and R148; that span reads AE.

It belongs to the methyltransferase superfamily. RNA methyltransferase RsmG family.

It localises to the cytoplasm. Specifically methylates the N7 position of a guanine in 16S rRNA. The sequence is that of Ribosomal RNA small subunit methyltransferase G from Streptococcus equi subsp. equi (strain 4047).